Consider the following 530-residue polypeptide: MEDDSLYLRGEWQFNHFSKLTSSRPDAAFAEIQRTSLPEKSPLSCETRVDLCDDLAPVARQLAPREKLPLSSRRPAAVGAGLQNMGNTCYVNASLQCLTYTPPLANYMLSREHSQTCHRHKGCMLCTMQAHITRALHNPGHVIQPSQALAAGFHRGKQEDAHEFLMFTVDAMKKACLPGHKQVDHHSKDTTLIHQIFGGYWRSQIKCLHCHGISDTFDPYLDIALDIQAAQSVQQALEQLVKPEELNGENAYHCGVCLQRAPASKTLTLHTSAKVLILVLKRFSDVTGNKIAKNVQYPECLDMQPYMSQPNTGPLVYVLYAVLVHAGWSCHNGHYFSYVKAQEGQWYKMDDAEVTASSITSVLSQQAYVLFYIQKSEWERHSESVSRGREPRALGAEDTDRRATQGELKRDHPCLQAPELDEHLVERATQESTLDHWKFLQEQNKTKPEFNVRKVEGTLPPDVLVIHQSKYKCGMKNHHPEQQSSLLNLSSSTPTHQESMNTGTLASLRGRARRSKGKNKHSKRALLVCQ.

One can recognise a USP domain in the interval 80–375; it reads AGLQNMGNTC…QAYVLFYIQK (296 aa). The active-site Nucleophile is the C89. H334 functions as the Proton acceptor in the catalytic mechanism. Basic and acidic residues-rich tracts occupy residues 382-392 and 398-412; these read SESVSRGREPR and DTDR…KRDH. 2 disordered regions span residues 382–412 and 477–530; these read SESV…KRDH and NHHP…LVCQ. Residues 493-505 are compositionally biased toward polar residues; it reads TPTHQESMNTGTL. The segment covering 510–524 has biased composition (basic residues); it reads GRARRSKGKNKHSKR.

This sequence belongs to the peptidase C19 family. USP17 subfamily. Expressed in heart, brain, liver and skeletal muscle.

It localises to the nucleus. Its subcellular location is the nucleolus. The protein resides in the endoplasmic reticulum. The enzyme catalyses Thiol-dependent hydrolysis of ester, thioester, amide, peptide and isopeptide bonds formed by the C-terminal Gly of ubiquitin (a 76-residue protein attached to proteins as an intracellular targeting signal).. Deubiquitinating enzyme that removes conjugated ubiquitin from specific proteins to regulate different cellular processes that may include cell proliferation, progression through the cell cycle, apoptosis, cell migration, and the cellular response to viral infection. In Homo sapiens (Human), this protein is Ubiquitin carboxyl-terminal hydrolase 17-like protein 24 (USP17L24).